Reading from the N-terminus, the 277-residue chain is Large ribosomal subunit protein uL2 (277 aa).

Residues 222 to 277 (GVAMNPVDHPHGGGEGRTSGGRHPVTPWGKPTKGKKTRSNKATDKFIMRSRHQRKK) are disordered.

The protein belongs to the universal ribosomal protein uL2 family. Part of the 50S ribosomal subunit. Forms a bridge to the 30S subunit in the 70S ribosome.

Functionally, one of the primary rRNA binding proteins. Required for association of the 30S and 50S subunits to form the 70S ribosome, for tRNA binding and peptide bond formation. It has been suggested to have peptidyltransferase activity; this is somewhat controversial. Makes several contacts with the 16S rRNA in the 70S ribosome. The protein is Large ribosomal subunit protein uL2 of Brucella abortus (strain S19).